The following is a 244-amino-acid chain: Carboxy-S-adenosyl-L-methionine synthase (244 aa).

S-adenosyl-L-methionine-binding positions include Tyr38, 63–65 (GCS), 88–89 (DN), 116–117 (DI), Asn131, and Arg198.

The protein belongs to the class I-like SAM-binding methyltransferase superfamily. Cx-SAM synthase family. In terms of assembly, homodimer.

It carries out the reaction prephenate + S-adenosyl-L-methionine = carboxy-S-adenosyl-L-methionine + 3-phenylpyruvate + H2O. Catalyzes the conversion of S-adenosyl-L-methionine (SAM) to carboxy-S-adenosyl-L-methionine (Cx-SAM). The protein is Carboxy-S-adenosyl-L-methionine synthase of Haemophilus ducreyi (strain 35000HP / ATCC 700724).